Consider the following 89-residue polypeptide: Large ribosomal subunit protein bL28 (89 aa).

Belongs to the bacterial ribosomal protein bL28 family.

The polypeptide is Large ribosomal subunit protein bL28 (Chlamydia caviae (strain ATCC VR-813 / DSM 19441 / 03DC25 / GPIC) (Chlamydophila caviae)).